A 142-amino-acid chain; its full sequence is MLQDFKAFINKGNVVDLAVAVIIGAAFGKIVSSLTDDLIMPLIGYFTGGLDFSSHFIRLGEIPANFTGSVTSYADLKNAGVPLIGFGQFITVAVNFLLIAFVVFLVVRAVQRFNKAEEAKPAEPAEDVVLLREILAELKKKG.

2 helical membrane passes run 14–34 (VVDLAVAVIIGAAFGKIVSSL) and 86–106 (FGQFITVAVNFLLIAFVVFLV).

This sequence belongs to the MscL family. As to quaternary structure, homopentamer.

Its subcellular location is the cell inner membrane. Channel that opens in response to stretch forces in the membrane lipid bilayer. May participate in the regulation of osmotic pressure changes within the cell. This Rhizorhabdus wittichii (strain DSM 6014 / CCUG 31198 / JCM 15750 / NBRC 105917 / EY 4224 / RW1) (Sphingomonas wittichii) protein is Large-conductance mechanosensitive channel.